Here is a 66-residue protein sequence, read N- to C-terminus: Opicalcin-1 (66 aa).

An N-terminal signal peptide occupies residues 1-22 (MKPSLIIVTFIVVFMAISCVAA). Positions 23 to 31 (DDEQETWIE) are excised as a propeptide. Intrachain disulfides connect Cys36-Cys50, Cys43-Cys54, and Cys49-Cys65. Positions 55–57 (KRR) are essential for stimulation of [3H]ryanodine binding to RYR1.

The protein belongs to the scorpion calcin family. In terms of tissue distribution, expressed by the venom gland.

It localises to the secreted. In terms of biological role, this toxin stabilizes ryanodine receptor 1 (RyR1) opening in a long-lasting subconductance state (35% of the full conductance state). Furthermore, it triggers calcium release from sarcoplasmic vesicles (2 nM are enough to induce a sharp release, and 67% of the total calcium is released after toxin (100 nM) addition) probably by acting as a cell-penetrating peptide (CPP). In addition, it has been shown to dose-dependently stimulate ryanodine binding to RyR1 (EC(50)=0.3 nM). It also augments the bell-shaped calcium-[3H]ryanodine binding curve that is maximal at about 10 uM calcium concentration. It binds a different site as ryanodine. It acts synergistically with caffeine. In vivo, intracerebroventricular injection into mice induces neurotoxic symptoms, followed by death. This chain is Opicalcin-1, found in Opistophthalmus carinatus (African yellow leg scorpion).